We begin with the raw amino-acid sequence, 158 residues long: Crossover junction endodeoxyribonuclease RuvC (158 aa).

Catalysis depends on residues D7, E67, and D139. Mg(2+)-binding residues include D7, E67, and D139.

It belongs to the RuvC family. As to quaternary structure, homodimer which binds Holliday junction (HJ) DNA. The HJ becomes 2-fold symmetrical on binding to RuvC with unstacked arms; it has a different conformation from HJ DNA in complex with RuvA. In the full resolvosome a probable DNA-RuvA(4)-RuvB(12)-RuvC(2) complex forms which resolves the HJ. The cofactor is Mg(2+).

It is found in the cytoplasm. It catalyses the reaction Endonucleolytic cleavage at a junction such as a reciprocal single-stranded crossover between two homologous DNA duplexes (Holliday junction).. Functionally, the RuvA-RuvB-RuvC complex processes Holliday junction (HJ) DNA during genetic recombination and DNA repair. Endonuclease that resolves HJ intermediates. Cleaves cruciform DNA by making single-stranded nicks across the HJ at symmetrical positions within the homologous arms, yielding a 5'-phosphate and a 3'-hydroxyl group; requires a central core of homology in the junction. The consensus cleavage sequence is 5'-(A/T)TT(C/G)-3'. Cleavage occurs on the 3'-side of the TT dinucleotide at the point of strand exchange. HJ branch migration catalyzed by RuvA-RuvB allows RuvC to scan DNA until it finds its consensus sequence, where it cleaves and resolves the cruciform DNA. In Prochlorococcus marinus (strain MIT 9211), this protein is Crossover junction endodeoxyribonuclease RuvC.